Here is a 298-residue protein sequence, read N- to C-terminus: MSIKHHPLQGALWMLTAGLAFAIVNSVAQYASIQFGLPSTTVALVQYAIAIVVILPYLKTLGIRQSLRTQQFGWHLLRVFLAVIGIQLWLWALAYPVPIWQGIALLMTSPLFATIGSGLWLREKVGMARWVATLTGFIGAMIILEPWADDFNLASLLPVGAAFFWASYSLMVKKLSSHDSPSTMVVYLLLLITPFNLLLALPDWQMPNGQTVWLLLIGAGVMTALAQWAIAKAYAVADASFVQPFDHAKLPLNVLAGWLVFGWVPPGRLWLGAAIIVLSVAFITQWETKKSRRERNIA.

A run of 9 helical transmembrane segments spans residues 8 to 28 (LQGALWMLTAGLAFAIVNSVA), 35 to 55 (FGLPSTTVALVQYAIAIVVIL), 79 to 99 (VFLAVIGIQLWLWALAYPVPI), 101 to 121 (QGIALLMTSPLFATIGSGLWL), 125 to 145 (VGMARWVATLTGFIGAMIILE), 151 to 171 (FNLASLLPVGAAFFWASYSLM), 184 to 204 (MVVYLLLLITPFNLLLALPDW), 211 to 231 (TVWLLLIGAGVMTALAQWAIA), and 258 to 278 (WLVFGWVPPGRLWLGAAIIVL). EamA domains follow at residues 10-144 (GALW…MIIL) and 156-284 (LLPV…AFIT).

Belongs to the drug/metabolite transporter (DMT) superfamily. 10 TMS drug/metabolite exporter (DME) (TC 2.A.7.3) family.

Its subcellular location is the cell membrane. Transports riboflavin into the cell. The protein is Riboflavin transporter of Vibrio cholerae serotype O1 (strain ATCC 39315 / El Tor Inaba N16961).